A 407-amino-acid chain; its full sequence is Serine hydroxymethyltransferase (407 aa).

Residues Leu-117 and 121–123 (GHL) contribute to the (6S)-5,6,7,8-tetrahydrofolate site. Lys-226 is subject to N6-(pyridoxal phosphate)lysine. (6S)-5,6,7,8-tetrahydrofolate is bound at residue Glu-242.

It belongs to the SHMT family. In terms of assembly, homodimer. Pyridoxal 5'-phosphate is required as a cofactor.

Its subcellular location is the cytoplasm. It carries out the reaction (6R)-5,10-methylene-5,6,7,8-tetrahydrofolate + glycine + H2O = (6S)-5,6,7,8-tetrahydrofolate + L-serine. It functions in the pathway one-carbon metabolism; tetrahydrofolate interconversion. Its pathway is amino-acid biosynthesis; glycine biosynthesis; glycine from L-serine: step 1/1. Functionally, catalyzes the reversible interconversion of serine and glycine with tetrahydrofolate (THF) serving as the one-carbon carrier. This reaction serves as the major source of one-carbon groups required for the biosynthesis of purines, thymidylate, methionine, and other important biomolecules. Also exhibits THF-independent aldolase activity toward beta-hydroxyamino acids, producing glycine and aldehydes, via a retro-aldol mechanism. This is Serine hydroxymethyltransferase from Thermus thermophilus (strain ATCC BAA-163 / DSM 7039 / HB27).